A 293-amino-acid chain; its full sequence is Bifunctional protein FolD (293 aa).

NADP(+) contacts are provided by residues G164–S166, S193, and T234.

It belongs to the tetrahydrofolate dehydrogenase/cyclohydrolase family. In terms of assembly, homodimer.

The catalysed reaction is (6R)-5,10-methylene-5,6,7,8-tetrahydrofolate + NADP(+) = (6R)-5,10-methenyltetrahydrofolate + NADPH. The enzyme catalyses (6R)-5,10-methenyltetrahydrofolate + H2O = (6R)-10-formyltetrahydrofolate + H(+). It participates in one-carbon metabolism; tetrahydrofolate interconversion. Catalyzes the oxidation of 5,10-methylenetetrahydrofolate to 5,10-methenyltetrahydrofolate and then the hydrolysis of 5,10-methenyltetrahydrofolate to 10-formyltetrahydrofolate. The sequence is that of Bifunctional protein FolD from Phocaeicola vulgatus (strain ATCC 8482 / DSM 1447 / JCM 5826 / CCUG 4940 / NBRC 14291 / NCTC 11154) (Bacteroides vulgatus).